Consider the following 277-residue polypeptide: Probable endonuclease 4 (277 aa).

H67, H107, E141, D173, H176, H210, D223, H225, and E255 together coordinate Zn(2+).

It belongs to the AP endonuclease 2 family. It depends on Zn(2+) as a cofactor.

It catalyses the reaction Endonucleolytic cleavage to 5'-phosphooligonucleotide end-products.. Its function is as follows. Endonuclease IV plays a role in DNA repair. It cleaves phosphodiester bonds at apurinic or apyrimidinic (AP) sites, generating a 3'-hydroxyl group and a 5'-terminal sugar phosphate. The sequence is that of Probable endonuclease 4 from Haloarcula marismortui (strain ATCC 43049 / DSM 3752 / JCM 8966 / VKM B-1809) (Halobacterium marismortui).